The primary structure comprises 365 residues: MSPELGGGYDGESPVSADLVAGDGDIEASLRPKNLHDFIGQPRVREQLQLVLTGAKMRGGTPDHILLSGPPGLGKTSMAMIIAAELGSSLRLTSGPALERAGDLAAMLSNLVEGDVLFIDEIHRIARPAEEMLYLAMEDFRVDVVVGKGPGATSIPLEVAPFTLVGATTRSGALTGPLRDRFGFTAHMDFYEPAELKQILMRSAGILGVQLGEEAGAEIASRSRGTPRIANRLLRRVRDYAEVRADGVVTREIAHAALAVYDVDQLGLDRLDRSVLSALVRSFGGGPVGVSTLAVAVGEEPATVEEVCEPFLVRAGMIARTPRGRVATAAAWTQLGLTPPPDAVTGGIDVRVNEPQASLFDPEDP.

The interval 1-191 (MSPELGGGYD…FGFTAHMDFY (191 aa)) is large ATPase domain (RuvB-L). Residues Leu30, Arg31, Gly72, Lys75, Thr76, Ser77, 138–140 (EDF), Arg181, Tyr191, and Arg228 each bind ATP. Thr76 is a binding site for Mg(2+). The tract at residues 192–262 (EPAELKQILM…IAHAALAVYD (71 aa)) is small ATPAse domain (RuvB-S). The head domain (RuvB-H) stretch occupies residues 265-365 (QLGLDRLDRS…QASLFDPEDP (101 aa)). Residues Arg320 and Arg325 each coordinate DNA.

This sequence belongs to the RuvB family. In terms of assembly, homohexamer. Forms an RuvA(8)-RuvB(12)-Holliday junction (HJ) complex. HJ DNA is sandwiched between 2 RuvA tetramers; dsDNA enters through RuvA and exits via RuvB. An RuvB hexamer assembles on each DNA strand where it exits the tetramer. Each RuvB hexamer is contacted by two RuvA subunits (via domain III) on 2 adjacent RuvB subunits; this complex drives branch migration. In the full resolvosome a probable DNA-RuvA(4)-RuvB(12)-RuvC(2) complex forms which resolves the HJ.

It is found in the cytoplasm. It catalyses the reaction ATP + H2O = ADP + phosphate + H(+). Functionally, the RuvA-RuvB-RuvC complex processes Holliday junction (HJ) DNA during genetic recombination and DNA repair, while the RuvA-RuvB complex plays an important role in the rescue of blocked DNA replication forks via replication fork reversal (RFR). RuvA specifically binds to HJ cruciform DNA, conferring on it an open structure. The RuvB hexamer acts as an ATP-dependent pump, pulling dsDNA into and through the RuvAB complex. RuvB forms 2 homohexamers on either side of HJ DNA bound by 1 or 2 RuvA tetramers; 4 subunits per hexamer contact DNA at a time. Coordinated motions by a converter formed by DNA-disengaged RuvB subunits stimulates ATP hydrolysis and nucleotide exchange. Immobilization of the converter enables RuvB to convert the ATP-contained energy into a lever motion, pulling 2 nucleotides of DNA out of the RuvA tetramer per ATP hydrolyzed, thus driving DNA branch migration. The RuvB motors rotate together with the DNA substrate, which together with the progressing nucleotide cycle form the mechanistic basis for DNA recombination by continuous HJ branch migration. Branch migration allows RuvC to scan DNA until it finds its consensus sequence, where it cleaves and resolves cruciform DNA. This chain is Holliday junction branch migration complex subunit RuvB, found in Rhodococcus opacus (strain B4).